Here is a 406-residue protein sequence, read N- to C-terminus: Argininosuccinate synthase (406 aa).

ATP is bound by residues 11–19 and Ala-38; that span reads AYSGGLDTS. 2 residues coordinate L-citrulline: Tyr-91 and Ser-96. Gly-121 is an ATP binding site. The L-aspartate site is built by Thr-123, Asn-127, and Asp-128. Asn-127 contacts L-citrulline. The L-citrulline site is built by Arg-131, Ser-181, Ser-190, Glu-266, and Tyr-278.

The protein belongs to the argininosuccinate synthase family. Type 1 subfamily. Homotetramer.

It localises to the cytoplasm. The enzyme catalyses L-citrulline + L-aspartate + ATP = 2-(N(omega)-L-arginino)succinate + AMP + diphosphate + H(+). It participates in amino-acid biosynthesis; L-arginine biosynthesis; L-arginine from L-ornithine and carbamoyl phosphate: step 2/3. The sequence is that of Argininosuccinate synthase from Campylobacter jejuni subsp. jejuni serotype O:2 (strain ATCC 700819 / NCTC 11168).